The sequence spans 495 residues: Cobyric acid synthase (495 aa).

The region spanning 256 to 444 (KVNVAVVLLR…VHGILDNPSV (189 aa)) is the GATase cobBQ-type domain. Residue cysteine 337 is the Nucleophile of the active site. Residue histidine 436 is part of the active site.

Belongs to the CobB/CobQ family. CobQ subfamily.

Its pathway is cofactor biosynthesis; adenosylcobalamin biosynthesis. Catalyzes amidations at positions B, D, E, and G on adenosylcobyrinic A,C-diamide. NH(2) groups are provided by glutamine, and one molecule of ATP is hydrogenolyzed for each amidation. This is Cobyric acid synthase from Bacteroides fragilis (strain ATCC 25285 / DSM 2151 / CCUG 4856 / JCM 11019 / LMG 10263 / NCTC 9343 / Onslow / VPI 2553 / EN-2).